Reading from the N-terminus, the 177-residue chain is R-phycoerythrin beta chain (177 aa).

Residues Asn35 and Asp39 each coordinate (2R,3E)-phycoerythrobilin. The phycourobilin site is built by Cys50, Asp54, and Cys61. Residues Asn72, 77 to 78 (RR), Cys82, and 84 to 85 (RD) contribute to the (2R,3E)-phycoerythrobilin site. Residue Asn72 is modified to N4-methylasparagine. 147–148 (SQ) contacts phycourobilin. Positions 154 and 158 each coordinate (2R,3E)-phycoerythrobilin.

Belongs to the phycobiliprotein family. In terms of assembly, heterododecamer of 6 alpha and 6 beta chains. The basic functional unit of phycobiliproteins is a ring-shaped hexamer formed from two back-to-back trimers contacting via the alpha chain subunits. The trimers are composed of alpha/beta subunit heterodimers arranged around a three-fold axis of symmetry. The phycoerythrins also contain a gamma subunit which is located in the center of the hexamer. In terms of processing, contains two covalently linked phycoerythrobilin chromophores and one covalently linked phycourobilin chromophore.

It is found in the plastid. The protein resides in the chloroplast thylakoid membrane. In terms of biological role, light-harvesting photosynthetic tetrapyrrole chromophore-protein from the phycobiliprotein complex. The protein is R-phycoerythrin beta chain (rpeB) of Agarophyton chilense (Red seaweed).